Consider the following 182-residue polypeptide: Bifunctional protein PyrR (182 aa).

The short motif at 99 to 111 (IVLVDDVLFTGRT) is the PRPP-binding element.

Belongs to the purine/pyrimidine phosphoribosyltransferase family. PyrR subfamily. As to quaternary structure, homodimer and homohexamer; in equilibrium.

The enzyme catalyses UMP + diphosphate = 5-phospho-alpha-D-ribose 1-diphosphate + uracil. Functionally, regulates transcriptional attenuation of the pyrimidine nucleotide (pyr) operon by binding in a uridine-dependent manner to specific sites on pyr mRNA. This disrupts an antiterminator hairpin in the RNA and favors formation of a downstream transcription terminator, leading to a reduced expression of downstream genes. In terms of biological role, also displays a weak uracil phosphoribosyltransferase activity which is not physiologically significant. The sequence is that of Bifunctional protein PyrR from Caldicellulosiruptor bescii (strain ATCC BAA-1888 / DSM 6725 / KCTC 15123 / Z-1320) (Anaerocellum thermophilum).